We begin with the raw amino-acid sequence, 356 residues long: Histidinol-phosphate aminotransferase (356 aa).

Lys214 carries the N6-(pyridoxal phosphate)lysine modification.

The protein belongs to the class-II pyridoxal-phosphate-dependent aminotransferase family. Histidinol-phosphate aminotransferase subfamily. In terms of assembly, homodimer. Pyridoxal 5'-phosphate is required as a cofactor.

It catalyses the reaction L-histidinol phosphate + 2-oxoglutarate = 3-(imidazol-4-yl)-2-oxopropyl phosphate + L-glutamate. It functions in the pathway amino-acid biosynthesis; L-histidine biosynthesis; L-histidine from 5-phospho-alpha-D-ribose 1-diphosphate: step 7/9. The chain is Histidinol-phosphate aminotransferase from Escherichia coli (strain 55989 / EAEC).